The sequence spans 104 residues: Large ribosomal subunit protein uL24 (104 aa).

This sequence belongs to the universal ribosomal protein uL24 family. In terms of assembly, part of the 50S ribosomal subunit.

Functionally, one of two assembly initiator proteins, it binds directly to the 5'-end of the 23S rRNA, where it nucleates assembly of the 50S subunit. One of the proteins that surrounds the polypeptide exit tunnel on the outside of the subunit. The protein is Large ribosomal subunit protein uL24 of Nitrobacter hamburgensis (strain DSM 10229 / NCIMB 13809 / X14).